Here is a 95-residue protein sequence, read N- to C-terminus: CRISPR-associated endoribonuclease Cas2 (95 aa).

Mg(2+) is bound at residue Asp10.

This sequence belongs to the CRISPR-associated endoribonuclease Cas2 protein family. Homodimer, forms a heterotetramer with a Cas1 homodimer. Mg(2+) is required as a cofactor.

In terms of biological role, CRISPR (clustered regularly interspaced short palindromic repeat), is an adaptive immune system that provides protection against mobile genetic elements (viruses, transposable elements and conjugative plasmids). CRISPR clusters contain sequences complementary to antecedent mobile elements and target invading nucleic acids. CRISPR clusters are transcribed and processed into CRISPR RNA (crRNA). Functions as a ssRNA-specific endoribonuclease. Involved in the integration of spacer DNA into the CRISPR cassette. This chain is CRISPR-associated endoribonuclease Cas2, found in Geobacter sulfurreducens (strain ATCC 51573 / DSM 12127 / PCA).